The following is a 127-amino-acid chain: Large ribosomal subunit protein bL20 (127 aa).

This sequence belongs to the bacterial ribosomal protein bL20 family.

Functionally, binds directly to 23S ribosomal RNA and is necessary for the in vitro assembly process of the 50S ribosomal subunit. It is not involved in the protein synthesizing functions of that subunit. This is Large ribosomal subunit protein bL20 from Bifidobacterium adolescentis (strain ATCC 15703 / DSM 20083 / NCTC 11814 / E194a).